The chain runs to 458 residues: UDP-N-acetylglucosamine 1-carboxyvinyltransferase (458 aa).

Position 22-23 (22-23 (KN)) interacts with phosphoenolpyruvate. UDP-N-acetyl-alpha-D-glucosamine is bound at residue R94. D119 (proton donor) is an active-site residue. UDP-N-acetyl-alpha-D-glucosamine is bound by residues D309 and V331.

Belongs to the EPSP synthase family. MurA subfamily.

It is found in the cytoplasm. The catalysed reaction is phosphoenolpyruvate + UDP-N-acetyl-alpha-D-glucosamine = UDP-N-acetyl-3-O-(1-carboxyvinyl)-alpha-D-glucosamine + phosphate. Its pathway is cell wall biogenesis; peptidoglycan biosynthesis. Its function is as follows. Cell wall formation. Adds enolpyruvyl to UDP-N-acetylglucosamine. The sequence is that of UDP-N-acetylglucosamine 1-carboxyvinyltransferase from Chlamydia pneumoniae (Chlamydophila pneumoniae).